The following is a 163-amino-acid chain: Endoribonuclease YbeY (163 aa).

3 residues coordinate Zn(2+): His119, His123, and His129.

This sequence belongs to the endoribonuclease YbeY family. It depends on Zn(2+) as a cofactor.

It is found in the cytoplasm. Functionally, single strand-specific metallo-endoribonuclease involved in late-stage 70S ribosome quality control and in maturation of the 3' terminus of the 16S rRNA. The chain is Endoribonuclease YbeY from Actinobacillus pleuropneumoniae serotype 5b (strain L20).